A 418-amino-acid chain; its full sequence is Glutamyl-tRNA reductase (418 aa).

Substrate contacts are provided by residues 49 to 52, serine 108, 113 to 115, and glutamine 119; these read TCNR and EPQ. Cysteine 50 serves as the catalytic Nucleophile. 188 to 193 serves as a coordination point for NADP(+); that stretch reads GAGETI.

It belongs to the glutamyl-tRNA reductase family. Homodimer.

It catalyses the reaction (S)-4-amino-5-oxopentanoate + tRNA(Glu) + NADP(+) = L-glutamyl-tRNA(Glu) + NADPH + H(+). It functions in the pathway porphyrin-containing compound metabolism; protoporphyrin-IX biosynthesis; 5-aminolevulinate from L-glutamyl-tRNA(Glu): step 1/2. Catalyzes the NADPH-dependent reduction of glutamyl-tRNA(Glu) to glutamate 1-semialdehyde (GSA). The chain is Glutamyl-tRNA reductase from Aliivibrio fischeri (strain ATCC 700601 / ES114) (Vibrio fischeri).